Reading from the N-terminus, the 424-residue chain is UPF0597 protein Sbal_3070 (424 aa).

The protein belongs to the UPF0597 family.

The chain is UPF0597 protein Sbal_3070 from Shewanella baltica (strain OS155 / ATCC BAA-1091).